The following is a 429-amino-acid chain: UPF0761 membrane protein ABO_1543 (429 aa).

6 consecutive transmembrane segments (helical) span residues 45–65 (LFAI…VPAL), 102–122 (LTVL…STVE), 141–161 (LLMY…GLAI), 184–204 (WLAV…YTVV), 216–236 (LGAA…TFFI), and 256–278 (LLWI…ALVV).

It belongs to the UPF0761 family.

It is found in the cell inner membrane. The polypeptide is UPF0761 membrane protein ABO_1543 (Alcanivorax borkumensis (strain ATCC 700651 / DSM 11573 / NCIMB 13689 / SK2)).